The chain runs to 319 residues: Inositol phosphoceramide mannosyltransferase 1 (319 aa).

A helical membrane pass occupies residues 8 to 28 (LLLKGIPICGVILLILWGYSL). N-linked (GlcNAc...) asparagine glycosylation is found at Asn-115 and Asn-198. The next 2 membrane-spanning stretches (helical) occupy residues 211-231 (PTVFLSAGPLFLSYQFCKYLL) and 279-299 (VLFFAFLAAFAILFLCLRVVF).

Belongs to the glycosyltransferase 32 family.

The protein localises to the golgi apparatus. Its subcellular location is the cis-Golgi network membrane. It localises to the trans-Golgi network membrane. In terms of biological role, with imt2 and imt3, is required for the synthesis of mannosyl phosphorylinositol ceramide (MIPC). Catalyzes the addition of mannosyl to phosphorylinositol ceramide (IPC). MIPC is essential for cell morphology, cell-surface distribution of ergosterol, localization for plasma-membrane transporters, and lipid-raft-mediated endocytosis of plasma membrane proteins to the vacuole. This is Inositol phosphoceramide mannosyltransferase 1 (imt1) from Schizosaccharomyces pombe (strain 972 / ATCC 24843) (Fission yeast).